We begin with the raw amino-acid sequence, 145 residues long: MVLSFILVQNRQGKTRLAKWYAPYSDEEKVKLKGEVHRLVAPRDQKYQSNFVEFKRSTKIVYRRYAGLFFCACVDATDNELAYLEAIHFFVEVLDQFFGNVCELDLVFNFYKVYAILDEVFLAGEIEETSKQVVLTRLEHLDKLE.

Belongs to the adaptor complexes small subunit family. Adaptor protein complex 2 (AP-2) is a heterotetramer composed of two large adaptins (alpha-type subunit apl3 and beta-type subunit apl1), a medium chain (mu-type subunit apm4) and a small adaptin (sigma-type subunit aps2).

It is found in the cell membrane. It localises to the membrane. The protein localises to the coated pit. Component of the adaptor complexes which link clathrin to receptors in coated vesicles. Clathrin-associated protein complexes are believed to interact with the cytoplasmic tails of membrane proteins, leading to their selection and concentration. This chain is AP-2 complex subunit sigma (aps2), found in Emericella nidulans (strain FGSC A4 / ATCC 38163 / CBS 112.46 / NRRL 194 / M139) (Aspergillus nidulans).